Consider the following 418-residue polypeptide: Gamma-glutamyl phosphate reductase (418 aa).

It belongs to the gamma-glutamyl phosphate reductase family.

The protein resides in the cytoplasm. It carries out the reaction L-glutamate 5-semialdehyde + phosphate + NADP(+) = L-glutamyl 5-phosphate + NADPH + H(+). The protein operates within amino-acid biosynthesis; L-proline biosynthesis; L-glutamate 5-semialdehyde from L-glutamate: step 2/2. In terms of biological role, catalyzes the NADPH-dependent reduction of L-glutamate 5-phosphate into L-glutamate 5-semialdehyde and phosphate. The product spontaneously undergoes cyclization to form 1-pyrroline-5-carboxylate. The chain is Gamma-glutamyl phosphate reductase from Dechloromonas aromatica (strain RCB).